Here is a 154-residue protein sequence, read N- to C-terminus: Large-conductance mechanosensitive channel (154 aa).

The next 3 membrane-spanning stretches (helical) occupy residues 14 to 34 (VMDL…VTSL), 38 to 58 (IITP…LFIN), and 81 to 101 (GLFL…FIVI).

It belongs to the MscL family. In terms of assembly, homopentamer.

Its subcellular location is the cell membrane. In terms of biological role, channel that opens in response to stretch forces in the membrane lipid bilayer. May participate in the regulation of osmotic pressure changes within the cell. This Brevibacillus brevis (strain 47 / JCM 6285 / NBRC 100599) protein is Large-conductance mechanosensitive channel.